The following is a 227-amino-acid chain: Probable septum site-determining protein MinC (227 aa).

It belongs to the MinC family. As to quaternary structure, interacts with MinD and FtsZ.

In terms of biological role, cell division inhibitor that blocks the formation of polar Z ring septums. Rapidly oscillates between the poles of the cell to destabilize FtsZ filaments that have formed before they mature into polar Z rings. Prevents FtsZ polymerization. The sequence is that of Probable septum site-determining protein MinC from Geobacillus thermodenitrificans (strain NG80-2).